The sequence spans 414 residues: FAD-dependent monooxygenase adaC (414 aa).

FAD is bound by residues Glu-32, Ala-43, Arg-115, Asp-325, and Gly-338.

The protein belongs to the paxM FAD-dependent monooxygenase family. FAD is required as a cofactor.

It catalyses the reaction 3-(2,4-dioxopentyl)-3,6,8,9-tetrahydroxy-1-oxo-1,2,3,4-tetrahydroanthracene-2-carboxyl-[ACP] + NADPH + O2 + H(+) = 3-(2,4-dioxopentyl)-2,3,6,8,9-pentahydroxy-1-oxo-1,2,3,4-tetrahydroanthracene-2-carboxyl-[ACP] + NADP(+) + H2O. Its pathway is secondary metabolite biosynthesis. Functionally, FAD-dependent monooxygenase; part of the gene cluster that mediates the biosynthesis of the linear tetracyclic TAN-1612 neuropeptide Y receptor antagonist. The decaketide backbone of TAN-1612 is synthesized by the non-reducing polyketide synthase adaA via condensation of one acetyl-CoA starter unit with 9 malonyl-CoA units. The FAD-dependent monooxygenase adaC then performs hydroxylation at C2 while the polaketide chain is still attached to the NRPKS adaA. The alpha-hydroxylation step at C2 appears to be crucial for the following C18-C1 Claisen cyclization and release of the C9-hydroxyl version of TAN-1612 from the NRPKS adaA, two steps performed by the lactamase-like protein adaB. Finally, the O-methyltransferase adaD performs the C9 O-methylation to complete the biosynthesis of TAN-1612. This Aspergillus niger protein is FAD-dependent monooxygenase adaC.